Here is a 66-residue protein sequence, read N- to C-terminus: Large ribosomal subunit protein bL35 (66 aa).

Over residues 1 to 26 (MPKMKTHRGAAKRFKKTGTGKLKRGH) the composition is skewed to basic residues. The tract at residues 1–48 (MPKMKTHRGAAKRFKKTGTGKLKRGHAYTSHLFANKTQKQKRKLRKAT) is disordered.

This sequence belongs to the bacterial ribosomal protein bL35 family.

This Geobacillus sp. (strain WCH70) protein is Large ribosomal subunit protein bL35.